We begin with the raw amino-acid sequence, 601 residues long: Elongation factor 4 (601 aa).

The tr-type G domain occupies 7 to 189; the sequence is DNIRNFSIVA…AIVKRLPPPK (183 aa). GTP contacts are provided by residues 19 to 24 and 136 to 139; these read DHGKST and NKVD.

This sequence belongs to the TRAFAC class translation factor GTPase superfamily. Classic translation factor GTPase family. LepA subfamily.

The protein localises to the cell inner membrane. It carries out the reaction GTP + H2O = GDP + phosphate + H(+). Required for accurate and efficient protein synthesis under certain stress conditions. May act as a fidelity factor of the translation reaction, by catalyzing a one-codon backward translocation of tRNAs on improperly translocated ribosomes. Back-translocation proceeds from a post-translocation (POST) complex to a pre-translocation (PRE) complex, thus giving elongation factor G a second chance to translocate the tRNAs correctly. Binds to ribosomes in a GTP-dependent manner. The sequence is that of Elongation factor 4 from Methylorubrum populi (strain ATCC BAA-705 / NCIMB 13946 / BJ001) (Methylobacterium populi).